The sequence spans 438 residues: Xylose isomerase (438 aa).

Catalysis depends on residues H100 and D103. Mg(2+) is bound by residues E231, E267, H270, D295, D306, D308, and D338.

It belongs to the xylose isomerase family. As to quaternary structure, homotetramer. It depends on Mg(2+) as a cofactor.

The protein resides in the cytoplasm. It catalyses the reaction alpha-D-xylose = alpha-D-xylulofuranose. In Thermoanaerobacter sp. (strain X514), this protein is Xylose isomerase.